The following is a 392-amino-acid chain: MTLRRLRKLQQKEEATAAPDPAGRAPDSEAARAAPLPSGPPAAAAPPGAPGEELYAALEDYHPAELYRALAVSGGTLPRRKGSGFRWKNFTQSPEQQRKVLTLEKGDNQTFGFEIQTYGLHHREEQRVEMVTFVCRVHESSPAQLAGLTPGDTIASVNGLNVEGIRHREIVDIIKASGNVLRLETLYGTSIRKAELEARLQYLKQTLYEKWGEYRSLMVQEQRLVHGLVVKDPSIYDTLESVRSCLYGAGLLPGSLPFGPLLAAPGSARGGARRAKGDTDDAVYHTCFFGGAEPQALPPPPPPARALGPSSAETPASVLFPAPRSTLSRSASVRCAGPGGGGGAPGALWTEAREQALCGAGLRKTKYRSFRRRLLKFIPGLNRSLEEEESQL.

The disordered stretch occupies residues Met-1–Pro-50. The span at Pro-37–Ala-49 shows a compositional bias: pro residues. Residue Thr-76 is modified to Phosphothreonine. Ser-93 carries the phosphoserine modification. The 90-residue stretch at Val-100 to Thr-189 folds into the PDZ domain. An interaction with PSCD3 region spans residues Val-180–Pro-257. Tyr-236 carries the phosphotyrosine modification. An Omega-N-methylarginine modification is found at Arg-269. A disordered region spans residues Pro-294–Pro-315. Position 384 is a phosphoserine (Ser-384).

As to quaternary structure, heteromer. Composed of TAMALIN, CYTH2 and at least one GRM1. Also interacts with GRM2, GRM3 and GRM5. Interacts with CYTH3. As to expression, highly expressed in brain, heart and lung, and to a lower extent in embryo, kidney and ovary.

It is found in the cytoplasm. The protein resides in the perinuclear region. It localises to the cell membrane. Its subcellular location is the postsynaptic cell membrane. In terms of biological role, plays a role in intracellular trafficking and contributes to the macromolecular organization of group 1 metabotropic glutamate receptors (mGluRs) at synapses. The chain is General receptor for phosphoinositides 1-associated scaffold protein from Mus musculus (Mouse).